The following is a 176-amino-acid chain: Glutathione-regulated potassium-efflux system ancillary protein KefF (176 aa).

FMN is bound by residues His8, 14 to 17, 65 to 68, and 105 to 108; these read SHAN, MQWY, and TTGG.

The protein belongs to the NAD(P)H dehydrogenase (quinone) family. KefF subfamily. In terms of assembly, homodimer. Interacts with KefC. FMN serves as cofactor.

The protein resides in the cell inner membrane. The catalysed reaction is a quinone + NADH + H(+) = a quinol + NAD(+). It catalyses the reaction a quinone + NADPH + H(+) = a quinol + NADP(+). Its function is as follows. Regulatory subunit of a potassium efflux system that confers protection against electrophiles. Required for full activity of KefC. Shows redox enzymatic activity, but this enzymatic activity is not required for activation of KefC. The sequence is that of Glutathione-regulated potassium-efflux system ancillary protein KefF from Salmonella gallinarum (strain 287/91 / NCTC 13346).